The primary structure comprises 294 residues: Coiled-coil domain-containing protein 69 (294 aa).

Residues 1–43 (MGCGHSRLSCCKPPKKRRQRPDQPPKPEPQELGPLNGDTATTD) are disordered. G2 is lipidated: N-myristoyl glycine. The span at 20 to 29 (RPDQPPKPEP) shows a compositional bias: basic and acidic residues. Residues 47–270 (ASEEAEQHQK…QEKEELLYRV (224 aa)) are a coiled coil. A phosphoserine mark is found at S152 and S239.

Belongs to the CCDC69 family.

Its subcellular location is the cytoplasm. The protein resides in the cytoskeleton. The protein localises to the spindle. It is found in the midbody. Functionally, may act as a scaffold to regulate the recruitment and assembly of spindle midzone components. Required for the localization of AURKB and PLK1 to the spindle midzone. The chain is Coiled-coil domain-containing protein 69 (CCDC69) from Bos taurus (Bovine).